The sequence spans 399 residues: Probable protein phosphatase 2C 28 (399 aa).

A PPM-type phosphatase domain is found at 48 to 356 (EFSMAVVQAN…DDITVIVVFL (309 aa)). Residues Asp87, Gly88, Asp288, and Asp347 each coordinate Mn(2+).

The protein belongs to the PP2C family. Mg(2+) serves as cofactor. Mn(2+) is required as a cofactor.

It catalyses the reaction O-phospho-L-seryl-[protein] + H2O = L-seryl-[protein] + phosphate. It carries out the reaction O-phospho-L-threonyl-[protein] + H2O = L-threonyl-[protein] + phosphate. This chain is Probable protein phosphatase 2C 28, found in Oryza sativa subsp. japonica (Rice).